Reading from the N-terminus, the 187-residue chain is UPF0340 protein SP70585_0722 (187 aa).

Belongs to the UPF0340 family.

This is UPF0340 protein SP70585_0722 from Streptococcus pneumoniae (strain 70585).